We begin with the raw amino-acid sequence, 194 residues long: Holliday junction branch migration complex subunit RuvA (194 aa).

The domain I stretch occupies residues 1 to 64; sequence MISSLNGILE…EDALSLFGFA (64 aa). The interval 65-143 is domain II; that stretch reads TTEELSLFET…KNWEAGVLSQ (79 aa). Residues 144–149 are flexible linker; it reads VTEANS. The domain III stretch occupies residues 149–194; it reads SDILATLTALGYSSSEAAKAISSLGDNGDLPLEERIKLALNYFNNK.

Belongs to the RuvA family. In terms of assembly, homotetramer. Forms an RuvA(8)-RuvB(12)-Holliday junction (HJ) complex. HJ DNA is sandwiched between 2 RuvA tetramers; dsDNA enters through RuvA and exits via RuvB. An RuvB hexamer assembles on each DNA strand where it exits the tetramer. Each RuvB hexamer is contacted by two RuvA subunits (via domain III) on 2 adjacent RuvB subunits; this complex drives branch migration. In the full resolvosome a probable DNA-RuvA(4)-RuvB(12)-RuvC(2) complex forms which resolves the HJ.

The protein resides in the cytoplasm. In terms of biological role, the RuvA-RuvB-RuvC complex processes Holliday junction (HJ) DNA during genetic recombination and DNA repair, while the RuvA-RuvB complex plays an important role in the rescue of blocked DNA replication forks via replication fork reversal (RFR). RuvA specifically binds to HJ cruciform DNA, conferring on it an open structure. The RuvB hexamer acts as an ATP-dependent pump, pulling dsDNA into and through the RuvAB complex. HJ branch migration allows RuvC to scan DNA until it finds its consensus sequence, where it cleaves and resolves the cruciform DNA. The protein is Holliday junction branch migration complex subunit RuvA of Dehalococcoides mccartyi (strain CBDB1).